The following is a 391-amino-acid chain: Elongation factor Tu 2 (391 aa).

One can recognise a tr-type G domain in the interval K10–E201. A G1 region spans residues G19 to T26. G19–T26 contacts GTP. Residue T26 participates in Mg(2+) binding. The segment at G55 to S59 is G2. A G3 region spans residues D76 to G79. Residues D76–H80 and N131–D134 contribute to the GTP site. The interval N131 to D134 is G4. The interval S169 to L171 is G5.

Belongs to the TRAFAC class translation factor GTPase superfamily. Classic translation factor GTPase family. EF-Tu/EF-1A subfamily. Monomer.

Its subcellular location is the cytoplasm. It carries out the reaction GTP + H2O = GDP + phosphate + H(+). Its function is as follows. GTP hydrolase that promotes the GTP-dependent binding of aminoacyl-tRNA to the A-site of ribosomes during protein biosynthesis. This is Elongation factor Tu 2 from Bartonella quintana (strain Toulouse) (Rochalimaea quintana).